Here is a 181-residue protein sequence, read N- to C-terminus: Ribonuclease HII (181 aa).

An RNase H type-2 domain is found at 1-181 (MICGIDEVGR…SLHRKSFQLI (181 aa)). 3 residues coordinate a divalent metal cation: Asp-6, Glu-7, and Asp-98.

This sequence belongs to the RNase HII family. The cofactor is Mn(2+). Requires Mg(2+) as cofactor.

Its subcellular location is the cytoplasm. The catalysed reaction is Endonucleolytic cleavage to 5'-phosphomonoester.. Its function is as follows. Endonuclease that specifically degrades the RNA of RNA-DNA hybrids. This chain is Ribonuclease HII, found in Borrelia duttonii (strain Ly).